Consider the following 673-residue polypeptide: Inactive polyglycylase TTLL10 (673 aa).

Residues 1-132 (MDHSCTRFIH…ADSDDTNAAG (132 aa)) are disordered. Residues 8 to 36 (FIHRRGPPTRTRAGFKRGKRPRIQQRPRA) are compositionally biased toward basic residues. Pro residues predominate over residues 52-62 (ASQPGPCPAPG). Residues 89 to 105 (PDHDADGHCGPDLEGAE) show a composition bias toward basic and acidic residues. In terms of domain architecture, TTL spans 155–552 (PGPFFYIGGS…TFRKSLRGQK (398 aa)). Residues 362-365 (QRYI), lysine 375, and aspartate 377 each bind ATP. Positions 569–673 (EADPRPHLGG…EREEPENARP (105 aa)) are disordered. Pro residues predominate over residues 612–627 (PAPPPLVPQRPRPPGP). A compositionally biased stretch (basic and acidic residues) spans 661–673 (AKEEREEPENARP).

Inactive polyglycylase. This chain is Inactive polyglycylase TTLL10, found in Homo sapiens (Human).